Here is a 433-residue protein sequence, read N- to C-terminus: 3-phosphoshikimate 1-carboxyvinyltransferase (433 aa).

Residues K23, S24, and R28 each contribute to the 3-phosphoshikimate site. Residue K23 coordinates phosphoenolpyruvate. Phosphoenolpyruvate is bound by residues G93 and R121. S167, Q169, D318, and K345 together coordinate 3-phosphoshikimate. Phosphoenolpyruvate is bound at residue Q169. The active-site Proton acceptor is the D318. 2 residues coordinate phosphoenolpyruvate: R349 and R390.

It belongs to the EPSP synthase family. In terms of assembly, monomer.

It is found in the cytoplasm. The catalysed reaction is 3-phosphoshikimate + phosphoenolpyruvate = 5-O-(1-carboxyvinyl)-3-phosphoshikimate + phosphate. The protein operates within metabolic intermediate biosynthesis; chorismate biosynthesis; chorismate from D-erythrose 4-phosphate and phosphoenolpyruvate: step 6/7. In terms of biological role, catalyzes the transfer of the enolpyruvyl moiety of phosphoenolpyruvate (PEP) to the 5-hydroxyl of shikimate-3-phosphate (S3P) to produce enolpyruvyl shikimate-3-phosphate and inorganic phosphate. The chain is 3-phosphoshikimate 1-carboxyvinyltransferase from Nitratiruptor sp. (strain SB155-2).